We begin with the raw amino-acid sequence, 547 residues long: Chaperonin GroEL (547 aa).

ATP-binding positions include 30-33, K51, 87-91, G415, and D496; these read TLGP and DGTTT. The segment at 528 to 547 is disordered; it reads KEEPMPMRGSGMGGMGGMDF. Residues 537 to 547 are compositionally biased toward gly residues; the sequence is SGMGGMGGMDF.

This sequence belongs to the chaperonin (HSP60) family. In terms of assembly, forms a cylinder of 14 subunits composed of two heptameric rings stacked back-to-back. Interacts with the co-chaperonin GroES.

It localises to the cytoplasm. It carries out the reaction ATP + H2O + a folded polypeptide = ADP + phosphate + an unfolded polypeptide.. Its function is as follows. Together with its co-chaperonin GroES, plays an essential role in assisting protein folding. The GroEL-GroES system forms a nano-cage that allows encapsulation of the non-native substrate proteins and provides a physical environment optimized to promote and accelerate protein folding. This Rickettsia canadensis (strain McKiel) protein is Chaperonin GroEL.